Here is a 130-residue protein sequence, read N- to C-terminus: ATP synthase epsilon chain, chloroplastic (130 aa).

This sequence belongs to the ATPase epsilon chain family. F-type ATPases have 2 components, CF(1) - the catalytic core - and CF(0) - the membrane proton channel. CF(1) has five subunits: alpha(3), beta(3), gamma(1), delta(1), epsilon(1). CF(0) has three main subunits: a, b and c.

It localises to the plastid. Its subcellular location is the chloroplast thylakoid membrane. Produces ATP from ADP in the presence of a proton gradient across the membrane. The protein is ATP synthase epsilon chain, chloroplastic of Emiliania huxleyi (Coccolithophore).